Consider the following 466-residue polypeptide: Sulfate adenylyltransferase subunit 1 (466 aa).

A tr-type G domain is found at 22-237 (KELVRFLTCG…LNTIDVKTQE (216 aa)). The interval 31 to 38 (GSVDDGKS) is G1. 31-38 (GSVDDGKS) lines the GTP pocket. Positions 89–93 (GITID) are G2. Positions 110-113 (DTPG) are G3. GTP contacts are provided by residues 110-114 (DTPGH) and 165-168 (NKMD). Residues 165 to 168 (NKMD) are G4. Residues 202 to 204 (SAL) form a G5 region.

This sequence belongs to the TRAFAC class translation factor GTPase superfamily. Classic translation factor GTPase family. CysN/NodQ subfamily. As to quaternary structure, heterodimer composed of CysD, the smaller subunit, and CysN.

The catalysed reaction is sulfate + ATP + H(+) = adenosine 5'-phosphosulfate + diphosphate. It participates in sulfur metabolism; hydrogen sulfide biosynthesis; sulfite from sulfate: step 1/3. With CysD forms the ATP sulfurylase (ATPS) that catalyzes the adenylation of sulfate producing adenosine 5'-phosphosulfate (APS) and diphosphate, the first enzymatic step in sulfur assimilation pathway. APS synthesis involves the formation of a high-energy phosphoric-sulfuric acid anhydride bond driven by GTP hydrolysis by CysN coupled to ATP hydrolysis by CysD. This chain is Sulfate adenylyltransferase subunit 1, found in Colwellia psychrerythraea (strain 34H / ATCC BAA-681) (Vibrio psychroerythus).